Here is a 412-residue protein sequence, read N- to C-terminus: Subtilisin-like protease 6 (412 aa).

The first 20 residues, 1 to 20 (MGFITKAIPIVLAALSTVNG), serve as a signal peptide directing secretion. A propeptide spanning residues 21–126 (AKILEAGPHA…VVRTSTNGTN (106 aa)) is cleaved from the precursor. In terms of domain architecture, Inhibitor I9 spans 36-120 (KYIVVMKREV…YIEPDFVVRT (85 aa)). Residues asparagine 123 and asparagine 126 are each glycosylated (N-linked (GlcNAc...) asparagine). The 278-residue stretch at 135–412 (SWGLARVSSK…SKLIYNGSGK (278 aa)) folds into the Peptidase S8 domain. Residues aspartate 167 and histidine 198 each act as charge relay system in the active site. 2 N-linked (GlcNAc...) asparagine glycosylation sites follow: asparagine 252 and asparagine 264. Serine 358 functions as the Charge relay system in the catalytic mechanism. A glycan (N-linked (GlcNAc...) asparagine) is linked at asparagine 408.

Belongs to the peptidase S8 family.

It localises to the secreted. Its function is as follows. Secreted subtilisin-like serine protease with keratinolytic activity that contributes to pathogenicity. The protein is Subtilisin-like protease 6 (SUB6) of Trichophyton equinum (Horse ringworm fungus).